Reading from the N-terminus, the 576-residue chain is Proline--tRNA ligase (576 aa).

The protein belongs to the class-II aminoacyl-tRNA synthetase family. ProS type 1 subfamily. As to quaternary structure, homodimer.

It localises to the cytoplasm. It catalyses the reaction tRNA(Pro) + L-proline + ATP = L-prolyl-tRNA(Pro) + AMP + diphosphate. Catalyzes the attachment of proline to tRNA(Pro) in a two-step reaction: proline is first activated by ATP to form Pro-AMP and then transferred to the acceptor end of tRNA(Pro). As ProRS can inadvertently accommodate and process non-cognate amino acids such as alanine and cysteine, to avoid such errors it has two additional distinct editing activities against alanine. One activity is designated as 'pretransfer' editing and involves the tRNA(Pro)-independent hydrolysis of activated Ala-AMP. The other activity is designated 'posttransfer' editing and involves deacylation of mischarged Ala-tRNA(Pro). The misacylated Cys-tRNA(Pro) is not edited by ProRS. This chain is Proline--tRNA ligase, found in Finegoldia magna (strain ATCC 29328 / DSM 20472 / WAL 2508) (Peptostreptococcus magnus).